A 720-amino-acid chain; its full sequence is Methionine--tRNA ligase (720 aa).

Residues 27–37 (PYANGQIHIGH) carry the 'HIGH' region motif. Zn(2+) is bound by residues cysteine 158, cysteine 161, cysteine 171, and cysteine 174. The 'KMSKS' region signature appears at 348 to 352 (KMSKS). Lysine 351 serves as a coordination point for ATP. The region spanning 614 to 720 (DFAKVDLRIA…SGAKPGMRVK (107 aa)) is the tRNA-binding domain.

Belongs to the class-I aminoacyl-tRNA synthetase family. MetG type 1 subfamily. As to quaternary structure, homodimer. Requires Zn(2+) as cofactor.

It is found in the cytoplasm. It carries out the reaction tRNA(Met) + L-methionine + ATP = L-methionyl-tRNA(Met) + AMP + diphosphate. In terms of biological role, is required not only for elongation of protein synthesis but also for the initiation of all mRNA translation through initiator tRNA(fMet) aminoacylation. The polypeptide is Methionine--tRNA ligase (Burkholderia ambifaria (strain MC40-6)).